We begin with the raw amino-acid sequence, 300 residues long: 7-methylguanosine phosphate-specific 5'-nucleotidase (300 aa).

Aspartate 41 serves as the catalytic Nucleophile. Aspartate 41 and aspartate 43 together coordinate Mg(2+). The active-site Proton donor is aspartate 43. Glutamate 88 contributes to the CMP binding site. A N(7)-methyl-GMP-binding site is contributed by glutamate 88. Residues 156-157 and lysine 205 contribute to the substrate site; that span reads SA. Aspartate 230 contacts Mg(2+). Residue lysine 256 is modified to N6-acetyllysine.

This sequence belongs to the pyrimidine 5'-nucleotidase family. Monomer.

It is found in the cytoplasm. The catalysed reaction is N(7)-methyl-GMP + H2O = N(7)-methylguanosine + phosphate. The enzyme catalyses CMP + H2O = cytidine + phosphate. It catalyses the reaction a ribonucleoside 5'-phosphate + H2O = a ribonucleoside + phosphate. Its function is as follows. Specifically hydrolyzes 7-methylguanosine monophosphate (m(7)GMP) to 7-methylguanosine and inorganic phosphate. The specific activity for m(7)GMP may protect cells against undesired salvage of m(7)GMP and its incorporation into nucleic acids. Also has weak activity for CMP. UMP and purine nucleotides are poor substrates. This chain is 7-methylguanosine phosphate-specific 5'-nucleotidase (Nt5c3b), found in Mus musculus (Mouse).